The sequence spans 139 residues: Large ribosomal subunit protein uL13 (139 aa).

It belongs to the universal ribosomal protein uL13 family. As to quaternary structure, part of the 50S ribosomal subunit.

In terms of biological role, this protein is one of the early assembly proteins of the 50S ribosomal subunit, although it is not seen to bind rRNA by itself. It is important during the early stages of 50S assembly. The chain is Large ribosomal subunit protein uL13 from Nitratiruptor sp. (strain SB155-2).